A 146-amino-acid chain; its full sequence is Type II secretion system core protein G (146 aa).

The propeptide at 1 to 9 (MKKMRKQTG) is leader sequence. Phenylalanine 10 is subject to N-methylphenylalanine. The chain crosses the membrane as a helical span at residues 10–30 (FTLLEVMVVVVILGILASFVV).

The protein belongs to the GSP G family. As to quaternary structure, type II secretion system is composed of four main components: the outer membrane complex, the inner membrane complex, the cytoplasmic secretion ATPase and the periplasm-spanning pseudopilus. Forms homomultimers. Interacts with EspL. In terms of processing, cleaved by the prepilin peptidase. Methylated by prepilin peptidase at the amino group of the N-terminal phenylalanine once the leader sequence is cleaved.

It localises to the cell inner membrane. Its function is as follows. Core component of the type II secretion system required for the energy-dependent secretion of extracellular factors such as proteases and toxins from the periplasm. Pseudopilin (pilin-like) protein that polymerizes to form the pseudopilus. Further polymerization triggers pseudopilus growth. In Vibrio cholerae serotype O1 (strain ATCC 39315 / El Tor Inaba N16961), this protein is Type II secretion system core protein G (epsG).